Here is a 191-residue protein sequence, read N- to C-terminus: Pyridoxal 5'-phosphate synthase subunit PdxT (191 aa).

52 to 54 (GES) provides a ligand contact to L-glutamine. Residue Cys81 is the Nucleophile of the active site. L-glutamine-binding positions include Arg108 and 136 to 137 (IR). Residues His172 and Glu174 each act as charge relay system in the active site.

The protein belongs to the glutaminase PdxT/SNO family. In terms of assembly, in the presence of PdxS, forms a dodecamer of heterodimers. Only shows activity in the heterodimer.

The enzyme catalyses aldehydo-D-ribose 5-phosphate + D-glyceraldehyde 3-phosphate + L-glutamine = pyridoxal 5'-phosphate + L-glutamate + phosphate + 3 H2O + H(+). It catalyses the reaction L-glutamine + H2O = L-glutamate + NH4(+). It functions in the pathway cofactor biosynthesis; pyridoxal 5'-phosphate biosynthesis. Its function is as follows. Catalyzes the hydrolysis of glutamine to glutamate and ammonia as part of the biosynthesis of pyridoxal 5'-phosphate. The resulting ammonia molecule is channeled to the active site of PdxS. This Actinobacillus pleuropneumoniae serotype 7 (strain AP76) protein is Pyridoxal 5'-phosphate synthase subunit PdxT.